A 269-amino-acid chain; its full sequence is NAD kinase (269 aa).

Asp45 functions as the Proton acceptor in the catalytic mechanism. NAD(+)-binding positions include 45 to 46 (DG), 122 to 123 (NE), Arg149, Asp151, and Ala186.

The protein belongs to the NAD kinase family. A divalent metal cation serves as cofactor.

Its subcellular location is the cytoplasm. The enzyme catalyses NAD(+) + ATP = ADP + NADP(+) + H(+). Involved in the regulation of the intracellular balance of NAD and NADP, and is a key enzyme in the biosynthesis of NADP. Catalyzes specifically the phosphorylation on 2'-hydroxyl of the adenosine moiety of NAD to yield NADP. The protein is NAD kinase of Staphylococcus haemolyticus (strain JCSC1435).